Here is a 106-residue protein sequence, read N- to C-terminus: Neisseria hypothetical transcription factor (106 aa).

The HTH cro/C1-type domain occupies 26–80; the sequence is MRLFRVNKGWSQEELARQCGLDRTYVSAVERKRWNIALSNIEKMAAALGVAAYQL. A DNA-binding region (H-T-H motif) is located at residues 37–56; the sequence is QEELARQCGLDRTYVSAVER.

In terms of assembly, homodimer. Can interact with the dimeric form of the DNA mimic protein DMP19 with 1:1 stoichiometry.

The protein localises to the cytoplasm. With respect to regulation, repressor activity is inhibited in the presence of the DNA mimic protein DMP19, which interacts with NHTF and prevents binding of NHTF to its DNA-binding sites. Functionally, transcriptional regulator probably involved in the response to nitrogen levels. Down-regulates its own expression as well as the expression of the downstream gene, glnD, which encodes the [Protein-PII] uridylyltransferase, a key enzyme in the nitrogen regulation system. Acts by binding to a specific palindromic DNA sequence (5'-TGTNANTNACA-3') in its 5'-untranslated region. This Neisseria meningitidis serogroup B (strain ATCC BAA-335 / MC58) protein is Neisseria hypothetical transcription factor.